Here is a 432-residue protein sequence, read N- to C-terminus: Enolase (432 aa).

Q166 provides a ligand contact to (2R)-2-phosphoglycerate. E208 (proton donor) is an active-site residue. The Mg(2+) site is built by D245, E291, and D318. (2R)-2-phosphoglycerate-binding residues include K343, R372, S373, and K394. K343 serves as the catalytic Proton acceptor.

The protein belongs to the enolase family. Requires Mg(2+) as cofactor.

Its subcellular location is the cytoplasm. It is found in the secreted. It localises to the cell surface. The enzyme catalyses (2R)-2-phosphoglycerate = phosphoenolpyruvate + H2O. Its pathway is carbohydrate degradation; glycolysis; pyruvate from D-glyceraldehyde 3-phosphate: step 4/5. Catalyzes the reversible conversion of 2-phosphoglycerate (2-PG) into phosphoenolpyruvate (PEP). It is essential for the degradation of carbohydrates via glycolysis. The polypeptide is Enolase (Leptospira interrogans serogroup Icterohaemorrhagiae serovar copenhageni (strain Fiocruz L1-130)).